An 88-amino-acid polypeptide reads, in one-letter code: Small ribosomal subunit protein bS20 (88 aa).

This sequence belongs to the bacterial ribosomal protein bS20 family.

Its function is as follows. Binds directly to 16S ribosomal RNA. This is Small ribosomal subunit protein bS20 from Mycoplasmopsis synoviae (strain 53) (Mycoplasma synoviae).